The following is a 1582-amino-acid chain: ATP-binding cassette sub-family C member 8 (1582 aa).

The Extracellular segment spans residues 1–30 (MPLAFCGTENHSAAYRVDQGVLNNGCFVDA). Cysteine 6 and cysteine 26 form a disulfide bridge. N-linked (GlcNAc...) asparagine glycosylation occurs at asparagine 10. The helical transmembrane segment at 31 to 47 (LNVVPHVFLLFITFPIL) threads the bilayer. Over 48–72 (FIGWGSQSSKVHIHHSTWLHFPGHN) the chain is Cytoplasmic. The chain crosses the membrane as a helical span at residues 73–89 (LRWILTFILLFVLVCEI). Residues 90-106 (AEGILSDGVTESRHLHL) lie on the Extracellular side of the membrane. A helical transmembrane segment spans residues 107–123 (YMPAGMAFMAAITSVVY). Topologically, residues 124–136 (YHNIETSNFPKLL) are cytoplasmic. Residues 137 to 153 (IALLIYWTLAFITKTIK) traverse the membrane as a helical segment. Residues 154 to 169 (FVKFYDHAIGFSQLRF) lie on the Extracellular side of the membrane. The helical transmembrane segment at 170-186 (CLTGLLVILYGMLLLVE) threads the bilayer. Residues 187–303 (VNVIRVRRYI…AFGRRLILSS (117 aa)) lie on the Cytoplasmic side of the membrane. The 304-residue stretch at 299-602 (LILSSTFRIL…LSSVVRSTVK (304 aa)) folds into the ABC transmembrane type-1 1 domain. A helical membrane pass occupies residues 304–319 (TFRILADLLGFAGPLC). The Extracellular portion of the chain corresponds to 320–356 (IFGIVDHLGKENHVFQPKTQFLGVYFVSSQEFLGNAY). Residues 357–372 (VLAVLLFLALLLQRTF) traverse the membrane as a helical segment. The Cytoplasmic segment spans residues 373 to 438 (LQASYYVAIE…MWFFFLCPNL (66 aa)). Residues 439-454 (WTMPVQIIVGVILLYY) form a helical membrane-spanning segment. Topologically, residues 455–460 (ILGVSA) are extracellular. The chain crosses the membrane as a helical span at residues 461–473 (LIGAAVIILLAPV). Topologically, residues 474 to 541 (QYFVATKLSQ…SLRAFAVYTS (68 aa)) are cytoplasmic. Residues 542–557 (ISIFMNTAIPIAAVLI) form a helical membrane-spanning segment. Topologically, residues 558 to 576 (TFVGHVSFFKESDLSPSVA) are extracellular. A helical membrane pass occupies residues 577 to 592 (FASLSLFHILVTPLFL). At 593-1013 (LSSVVRSTVK…YLSSAGILLL (421 aa)) the chain is on the cytoplasmic side. In terms of domain architecture, ABC transporter 1 spans 679–930 (VQIIGGFFTW…ECQLFEHWKT (252 aa)). Residues tryptophan 688, glycine 716, serine 720, and serine 721 each contribute to the ATP site. Position 720 (serine 720) interacts with Mg(2+). The segment at 741-766 (SNLPDSEGEDPSSPERETAAGSDIRS) is disordered. Glutamine 775 serves as a coordination point for Mg(2+). A compositionally biased stretch (basic and acidic residues) spans 939-950 (LEKETVMERKAS). The disordered stretch occupies residues 939-962 (LEKETVMERKASEPSQGLPRAMSS). Residues 1013-1307 (LSLLVFSQLL…MVRNLADMEI (295 aa)) form the ABC transmembrane type-1 2 domain. Residues 1014–1031 (SLLVFSQLLKHMVLVAID) traverse the membrane as a helical segment. Topologically, residues 1032 to 1067 (YWLAKWTDSALVLSPAARNCSLSQECDLDQSVYAMV) are extracellular. A glycan (N-linked (GlcNAc...) asparagine) is linked at asparagine 1050. The helical transmembrane segment at 1068-1084 (FTLLCSLGIVLCLVTSV) threads the bilayer. Over 1085–1143 (TVEWTGLKVAKRLHRSLLNRIILAPMRFFETTPLGSILNRFSSDCNTIDQHIPSTLECL) the chain is Cytoplasmic. A helical transmembrane segment spans residues 1144–1161 (SRSTLLCVSALTVISYVT). Position 1162 (proline 1162) is a topological domain, extracellular. A helical transmembrane segment spans residues 1163–1175 (VFLVALLPLAVVC). Residues 1176–1249 (YFIQKYFRVA…FLTAANRWLE (74 aa)) are Cytoplasmic-facing. A helical membrane pass occupies residues 1250-1265 (VCMEYIGACVVLIAAA). The Extracellular segment spans residues 1266–1281 (TSISNSLHRELSAGLV). A helical membrane pass occupies residues 1282–1297 (GLGLTYALMVSNYLNW). Residues 1298–1582 (MVRNLADMEI…VFASFVRADK (285 aa)) lie on the Cytoplasmic side of the membrane. The ABC transporter 2 domain maps to 1345–1579 (IQIQNLSVRY…KDSVFASFVR (235 aa)). ADP contacts are provided by threonine 1381, glycine 1382, glycine 1384, lysine 1385, serine 1386, and serine 1387. Serine 1483 serves as a coordination point for ATP.

This sequence belongs to the ABC transporter superfamily. ABCC family. Conjugate transporter (TC 3.A.1.208) subfamily. In terms of assembly, forms an heterooctamer with KCNJ11; four ABCC8/SUR1 molecules interact with one KCNJ11 homotetramer.

It is found in the cell membrane. KATP channels are regulated by cytoplasmic ATP/ADP ratios; ATP inhibits the channel by closing the pore, while ADP activates the channel. Activated by phosphatidylinositol 4,5-biphosphate (PtdIns(4,5)P2). Its function is as follows. Regulator subunit of pancreatic ATP-sensitive potassium channel (KATP), playing a major role in the regulation of insulin release. In pancreatic cells, it forms KATP channels with KCNJ11; KCNJ11 forms the channel pore while ABCC8 is required for activation and regulation. In Cricetus cricetus (Black-bellied hamster), this protein is ATP-binding cassette sub-family C member 8 (ABCC8).